The sequence spans 674 residues: MKTLKALKIFIIVYISSVSLESFAGFGESCSNLPITSDGYLETYTAYGYIIRSIDMKDPRGNCNPYTSSITFCFKNVEGSTSPCTIYTLNEGDARKISDLSTDNNPNLGANTVLKNIVLTVKKFGNDLCLAMPTSRGPMPVACKSLNATPAPTNPKYENCNIGKSCYTGANYSQSLINFSGLAVQCLSETLNKIFFTGNSCSSQDQNSRITHLAAFSTFQGYLKRIIGAALILYTMFFAFNMALNKEYATTEKITLFIIKFLFVVYFSIGLEPLNFSGGQTVKENGMLKYGLPLLTGAAPDFAEMIFNAAGSRGLCQFDNSKYKDGYKFYGLWDAIDCRIGYYLGLDLLYNIDKNGILGHSVGNGPGGNNKPIPNFDPDSKKDRPHDLSKAGALRFFTVMFGFLMSGHIIILVAGIAFSVIFLSILLYFITHYLVCMITIYVMTYISPIFIPMVLFTRTKAYFDGWVKVCISCALQPAVVAGFIALLITMYDSAIFKNCEFLRYDYEKGDIRFSTFELRLPSIDADKCQESFGYKMLKYYAGEGWEEHLLILFPIKSIVRDVVSILAELLCVLVFSVIFYYFSKSIGRFAADLTNGPNMDAVTASPTKIVDLVKKGAAFLQDASSVHAQGKSPVEDKPDIGSKRKDGVQQGEDSENSSGGELADLASGSGGGKL.

The signal sequence occupies residues 1 to 24 (MKTLKALKIFIIVYISSVSLESFA). Helical transmembrane passes span 226-246 (IIGAALILYTMFFAFNMALNK) and 254-274 (ITLFIIKFLFVVYFSIGLEPL). The tract at residues 363–384 (GNGPGGNNKPIPNFDPDSKKDR) is disordered. The next 4 membrane-spanning stretches (helical) occupy residues 409–429 (IIILVAGIAFSVIFLSILLYF), 436–456 (CMITIYVMTYISPIFIPMVLF), 469–489 (VCISCALQPAVVAGFIALLIT), and 562–582 (VVSILAELLCVLVFSVIFYYF). Residues 624–674 (SSVHAQGKSPVEDKPDIGSKRKDGVQQGEDSENSSGGELADLASGSGGGKL) form a disordered region. Over residues 633 to 647 (PVEDKPDIGSKRKDG) the composition is skewed to basic and acidic residues.

It belongs to the TrbL/VirB6 family.

It localises to the cell membrane. This is an uncharacterized protein from Rickettsia typhi (strain ATCC VR-144 / Wilmington).